A 269-amino-acid chain; its full sequence is Tryptophan synthase alpha chain (269 aa).

Active-site proton acceptor residues include Glu56 and Asp67.

It belongs to the TrpA family. Tetramer of two alpha and two beta chains.

It catalyses the reaction (1S,2R)-1-C-(indol-3-yl)glycerol 3-phosphate + L-serine = D-glyceraldehyde 3-phosphate + L-tryptophan + H2O. It participates in amino-acid biosynthesis; L-tryptophan biosynthesis; L-tryptophan from chorismate: step 5/5. Functionally, the alpha subunit is responsible for the aldol cleavage of indoleglycerol phosphate to indole and glyceraldehyde 3-phosphate. In Mycobacterium marinum (strain ATCC BAA-535 / M), this protein is Tryptophan synthase alpha chain.